Consider the following 422-residue polypeptide: Imidazolonepropionase (422 aa).

The Fe(3+) site is built by H82 and H84. The Zn(2+) site is built by H82 and H84. R91, Y154, and H187 together coordinate 4-imidazolone-5-propanoate. Y154 lines the N-formimidoyl-L-glutamate pocket. H252 lines the Fe(3+) pocket. H252 is a binding site for Zn(2+). E255 is a 4-imidazolone-5-propanoate binding site. Fe(3+) is bound at residue D327. D327 provides a ligand contact to Zn(2+). The N-formimidoyl-L-glutamate site is built by N329 and G331. Residue S332 participates in 4-imidazolone-5-propanoate binding.

This sequence belongs to the metallo-dependent hydrolases superfamily. HutI family. Zn(2+) is required as a cofactor. Requires Fe(3+) as cofactor.

The protein localises to the cytoplasm. It carries out the reaction 4-imidazolone-5-propanoate + H2O = N-formimidoyl-L-glutamate. Its pathway is amino-acid degradation; L-histidine degradation into L-glutamate; N-formimidoyl-L-glutamate from L-histidine: step 3/3. In terms of biological role, catalyzes the hydrolytic cleavage of the carbon-nitrogen bond in imidazolone-5-propanoate to yield N-formimidoyl-L-glutamate. It is the third step in the universal histidine degradation pathway. In Alkaliphilus metalliredigens (strain QYMF), this protein is Imidazolonepropionase.